A 247-amino-acid polypeptide reads, in one-letter code: Carboxy-S-adenosyl-L-methionine synthase (247 aa).

S-adenosyl-L-methionine is bound by residues Tyr-40, Gly-65 to Ser-67, Asp-90 to Asn-91, Asp-122 to Ile-123, Asn-137, and Arg-204.

Belongs to the class I-like SAM-binding methyltransferase superfamily. Cx-SAM synthase family. As to quaternary structure, homodimer.

It carries out the reaction prephenate + S-adenosyl-L-methionine = carboxy-S-adenosyl-L-methionine + 3-phenylpyruvate + H2O. Functionally, catalyzes the conversion of S-adenosyl-L-methionine (SAM) to carboxy-S-adenosyl-L-methionine (Cx-SAM). This is Carboxy-S-adenosyl-L-methionine synthase from Pseudomonas syringae pv. tomato (strain ATCC BAA-871 / DC3000).